The chain runs to 236 residues: tRNA1(Val) (adenine(37)-N6)-methyltransferase (236 aa).

This sequence belongs to the methyltransferase superfamily. tRNA (adenine-N(6)-)-methyltransferase family.

The protein localises to the cytoplasm. It catalyses the reaction adenosine(37) in tRNA1(Val) + S-adenosyl-L-methionine = N(6)-methyladenosine(37) in tRNA1(Val) + S-adenosyl-L-homocysteine + H(+). Functionally, specifically methylates the adenine in position 37 of tRNA(1)(Val) (anticodon cmo5UAC). This is tRNA1(Val) (adenine(37)-N6)-methyltransferase from Shewanella sp. (strain MR-4).